The chain runs to 58 residues: Microcin J25 (58 aa).

A propeptide spanning residues 1–37 (MIKHFHFNKLSSGKKNNVPSPAKGVIQIKKSASQLTK) is cleaved from the precursor. The isoglutamyl glycine isopeptide (Gly-Glu) cross-link spans 38 to 45 (GGAGHVPE).

It localises to the secreted. Peptide antibiotic that functions through inhibition of the bacterial DNA-dependent RNA polymerase (RNAP). Inhibits transcription by binding deep within RNAP secondary channel, where it sterically blocks the folding of the trigger loop, which is essential for efficient catalysis. In addition, it also seems to restrict access of nucleotide substrates to the catalytic center, and shows a partially competitive mode of inhibition with them. Exhibits potent bacteriocidal activity against a range of Enterobacteriaceae, including several pathogenic E.coli, Salmonella and Shigella strains. Also acts on the cytoplasmic membrane of Salmonella newport, producing alteration of membrane permeability and disruption of the subsequent gradient dissipation, which inhibits several processes essential for cell viability, such as oxygen consumption. Induces bacterial filamentation in susceptible cells in a non-SOS-dependent way, but this phenotype may result from impaired transcription of genes coding for cell division proteins. This chain is Microcin J25 (mcjA), found in Escherichia coli.